The primary structure comprises 168 residues: MAAQSKQAKPSGKQGGKKIIATNRKARHNYSIIEVFEAGVALQGTEVKSLRERHASLVDAFATVDDGEVWLRNLHIPEYLHGTWTNHEPRRNRKLLLHRRQIDTLFGKIREGNFALVPLSMYFLDGKVKVELALARGKHAHDKRQDLARRDAQREVIRELGRRAKGMG.

The segment at 1-20 (MAAQSKQAKPSGKQGGKKII) is disordered.

This sequence belongs to the SmpB family.

It is found in the cytoplasm. Functionally, required for rescue of stalled ribosomes mediated by trans-translation. Binds to transfer-messenger RNA (tmRNA), required for stable association of tmRNA with ribosomes. tmRNA and SmpB together mimic tRNA shape, replacing the anticodon stem-loop with SmpB. tmRNA is encoded by the ssrA gene; the 2 termini fold to resemble tRNA(Ala) and it encodes a 'tag peptide', a short internal open reading frame. During trans-translation Ala-aminoacylated tmRNA acts like a tRNA, entering the A-site of stalled ribosomes, displacing the stalled mRNA. The ribosome then switches to translate the ORF on the tmRNA; the nascent peptide is terminated with the 'tag peptide' encoded by the tmRNA and targeted for degradation. The ribosome is freed to recommence translation, which seems to be the essential function of trans-translation. The protein is SsrA-binding protein of Mycobacterium ulcerans (strain Agy99).